A 971-amino-acid chain; its full sequence is Nuclear factor NF-kappa-B p110 subunit (971 aa).

Over residues 23–41 the composition is skewed to low complexity; that stretch reads STSGYSSSTSPNSTNRSFS. The tract at residues 23–46 is disordered; it reads STSGYSSSTSPNSTNRSFSPAHSP. The RHD domain maps to 147-339; the sequence is KHVPQLRIVE…NAINNRKSAQ (193 aa). Ser431 is subject to Phosphoserine; by PKA. A Nuclear localization signal motif is present at residues 452 to 457; it reads SRKRRR. The disordered stretch occupies residues 453 to 496; sequence RKRRRTGSSANSSSSGTESSNNSLDLPKTLGLAQPPNGLPNLSQ. The span at 460 to 475 shows a compositional bias: low complexity; sequence SSANSSSSGTESSNNS. At Thr620 the chain carries Phosphothreonine. Tyr626 bears the Phosphotyrosine mark. ANK repeat units lie at residues 640–669, 673–702, 710–740, 745–775, and 783–812; these read DGDSALHVACQQDRAHYIRPLLGMGCNPNL, AGNTPLHVAVKEEHLSCVESFLNGVPTVQL, DGLTPLHMAIRQNKYDVAKKLISYDRTSISV, DGNNALHMAVLEQSVELLVLILDAQNENLTD, and AGHTPLELAERKANDRVVQLLKNVYPEKGE. Residues 826–877 are disordered; it reads IDSSSDESSDAGQLEIKSEEMDIETKDEDSVELDLSSGPRRQKDESSRDTEM. Residues 866–877 show a composition bias toward basic and acidic residues; the sequence is RQKDESSRDTEM. Ser950 is subject to Phosphoserine.

As to quaternary structure, rel-p68 subunit interacts with Dredd. Interacts with DMAP1. Interacts with akirin; interaction is immune stimulation-dependent; activates selected rel target gene promoters. Phosphorylated by lipopolysaccharide (LPS)-activated I-kappa-B kinase complex before being cleaved. Rel-p110 subunit is cleaved within seconds of an immune challenge into Rel-p49 subunit and Rel-p68 subunit. Rel-p110 subunit reappears after 45 minutes.

The protein localises to the nucleus. It is found in the cytoplasm. Its function is as follows. Transcription factor that plays a key role in the humoral immune response as part of the peptidoglycan recognition protein (IMD) signaling pathway. Rel-p68 subunit translocates to the nucleus where it binds to the promoter of the Cecropin A1 gene and probably other antimicrobial peptide genes. I-kappa-B kinase complex (IKKbeta and key) and PGRP-LC are essential signaling components in transmitting the lipopolysaccharide (LPS) signal leading to cact degradation for NF-kappa-B (rel) activation. Part of a Toll-related receptor pathway that functions in the apoptosis of unfit cells during cell competition. Also part of some antiviral immunity: activated downstream of Sting signaling, which detects double-stranded RNA (dsRNA) from viruses, and promotes expression of antiviral effector genes. May be part of a NF-kappa-B and Tollo signaling cascade that regulates development of the peripheral nervous system. Possibly post-transcriptionally regulates the neuron-specific genes sc and ase, by promoting the rapid turnover of their transcripts in the wing imaginal disk. This Drosophila melanogaster (Fruit fly) protein is Nuclear factor NF-kappa-B p110 subunit.